Reading from the N-terminus, the 828-residue chain is Transcription factor SOX-6 (828 aa).

The segment at 1 to 51 (MSSKQATSPFACAADGEDAMTQDLTSREKEEGSDQHVASHLPLHPIMHNKP) is disordered. A compositionally biased stretch (basic and acidic residues) spans 25–34 (TSREKEEGSD). Position 119 is a phosphothreonine (threonine 119). A coiled-coil region spans residues 184-262 (LAEKERQLST…LLQQQIQVQG (79 aa)). Residues 380–470 (SPGAKMPSTP…KSSIPSPIGG (91 aa)) are disordered. The segment covering 393–402 (NTAGTVSPTG) has biased composition (polar residues). Serine 399 carries the post-translational modification Phosphoserine. Threonine 401 is modified (phosphothreonine). Glycyl lysine isopeptide (Lys-Gly) (interchain with G-Cter in SUMO) cross-links involve residues lysine 404 and lysine 417. A phosphoserine mark is found at serine 439 and serine 442. Residues 439–461 (SPTSPTQNLFPASKTSPVNLPNK) are compositionally biased toward polar residues. The HMG box DNA-binding region spans 621 to 689 (IKRPMNAFMV…IHLEKYPNYK (69 aa)). A compositionally biased stretch (polar residues) spans 753 to 781 (TPSPQMTSDCSSTSASPEPSLPVIQSTYG). Positions 753–828 (TPSPQMTSDC…NEAPEAVSAN (76 aa)) are disordered. Residues 796 to 809 (NGEDEMEMYDDYED) show a composition bias toward acidic residues.

As to quaternary structure, homodimer. Interacts with DAZAP2. May interact with CENPK. In terms of processing, sumoylation inhibits the transcriptional activity. In terms of tissue distribution, expressed in a wide variety of tissues, most abundantly in skeletal musclen.

The protein resides in the nucleus. Its subcellular location is the cytoplasm. Transcription factor that plays a key role in several developmental processes, including neurogenesis, chondrocytes differentiation and cartilage formation. Specifically binds the 5'-AACAAT-3' DNA motif present in enhancers and super-enhancers and promotes expression of genes important for chondrogenesis. Required for overt chondrogenesis when condensed prechondrocytes differentiate into early stage chondrocytes: SOX5 and SOX6 cooperatively bind with SOX9 on active enhancers and super-enhancers associated with cartilage-specific genes, and thereby potentiate SOX9's ability to transactivate. Not involved in precartilaginous condensation, the first step in chondrogenesis, during which skeletal progenitors differentiate into prechondrocytes. Together with SOX5, required to form and maintain a pool of highly proliferating chondroblasts between epiphyses and metaphyses, to form columnar chondroblasts, delay chondrocyte prehypertrophy but promote hypertrophy, and to delay terminal differentiation of chondrocytes on contact with ossification fronts. Binds to the proximal promoter region of the myelin protein MPZ gene, and is thereby involved in the differentiation of oligodendroglia in the developing spinal tube. Binds to the gene promoter of MBP and acts as a transcriptional repressor. In Homo sapiens (Human), this protein is Transcription factor SOX-6.